The chain runs to 363 residues: Strychnine O-methyltransferase (363 aa).

Glycine 204, aspartate 227, aspartate 249, methionine 250, and lysine 263 together coordinate S-adenosyl-L-methionine. Histidine 267 serves as the catalytic Proton acceptor.

The protein belongs to the class I-like SAM-binding methyltransferase superfamily. Cation-independent O-methyltransferase family.

The catalysed reaction is 10-hydroxystrychnine + S-adenosyl-L-methionine = beta-colubrine + S-adenosyl-L-homocysteine + H(+). It catalyses the reaction 11-demethylbrucine + S-adenosyl-L-methionine = brucine + S-adenosyl-L-homocysteine + H(+). Its pathway is alkaloid biosynthesis. O-methyltransferase involved in the biosynthesis of curare monoterpene indole alkaloids (MIAs), natural products such as strychnine, a neurotoxic compound used as a pesticide to control rodents, and its pharmacologically active derivatives, including brucine, used to regulate blood pressure. Curare alkaloids act as animal glycine receptor antagonists. Catalyzes the conversion of 10-OH strychnine to beta-colubrine, and of 11-deMe brucine to brucine. In Strychnos nux-vomica (Poison nut), this protein is Strychnine O-methyltransferase.